The primary structure comprises 86 residues: Defensin-like SRCA-homolog protein (86 aa).

Positions 1–26 (MRCVVLFMVSCLLIVLLINHFEEVEA) are cleaved as a signal peptide. 4 disulfides stabilise this stretch: Cys-32–Cys-84, Cys-42–Cys-70, Cys-52–Cys-79, and Cys-68–Cys-81.

Belongs to the DEFL family.

The protein localises to the secreted. Functionally, involved in male-mediated self-incompatibility. The polypeptide is Defensin-like SRCA-homolog protein (SCR37) (Arabidopsis lyrata (Lyre-leaved rock-cress)).